A 649-amino-acid chain; its full sequence is Protein phosphatase Slingshot homolog 3 (649 aa).

Positions 1–20 are enriched in polar residues; sequence MALVTVSRSPPASGHSTPVG. The tract at residues 1 to 32 is disordered; sequence MALVTVSRSPPASGHSTPVGPTQDRVVRRRGR. The residue at position 2 (Ala-2) is an N-acetylalanine. Ser-9 and Ser-38 each carry phosphoserine. The tract at residues 49–90 is disordered; that stretch reads LQDGGDSNVASEADSEPMEEPSGEEQPTEDQTDKGQGLQSPW. Acidic residues predominate over residues 61–78; it reads ADSEPMEEPSGEEQPTED. Position 88 is a phosphoserine (Ser-88). The DEK-C domain occupies 266–321; the sequence is EKMEQAILAELWQVLDTSDLDSVTSKEIRQALELRLGCPLQQYRDFIDNQMLLLMA. A Tyrosine-protein phosphatase domain is found at 325–466; the sequence is RASRIFPHLY…LRTYQGILTA (142 aa). Cys-410 (phosphocysteine intermediate) is an active-site residue. 2 stretches are compositionally biased toward low complexity: residues 541–551 and 608–627; these read LEPSESESTPE and TRAF…GMSS. 2 disordered regions span residues 541 to 586 and 608 to 649; these read LEPS…KGPW and TRAF…EDKA. The segment covering 639-649 has biased composition (basic and acidic residues); sequence SVDDSREEDKA.

This sequence belongs to the protein-tyrosine phosphatase family. Does not bind to, or colocalize with, filamentous actin. In terms of tissue distribution, expressed in brain, small intestine and testis. Also expressed at lower levels in heart, kidney, liver, spleen and thymus.

The protein localises to the cytoplasm. The protein resides in the cytoskeleton. Its subcellular location is the nucleus. It carries out the reaction O-phospho-L-tyrosyl-[protein] + H2O = L-tyrosyl-[protein] + phosphate. The enzyme catalyses O-phospho-L-seryl-[protein] + H2O = L-seryl-[protein] + phosphate. The catalysed reaction is O-phospho-L-threonyl-[protein] + H2O = L-threonyl-[protein] + phosphate. Its function is as follows. Protein phosphatase which may play a role in the regulation of actin filament dynamics. Can dephosphorylate and activate the actin binding/depolymerizing factor cofilin, which subsequently binds to actin filaments and stimulates their disassembly. This Mus musculus (Mouse) protein is Protein phosphatase Slingshot homolog 3 (Ssh3).